Here is a 460-residue protein sequence, read N- to C-terminus: Signal recognition particle 54 kDa protein (460 aa).

GTP contacts are provided by residues 104 to 111 (GLQGSGKT), 184 to 188 (DTAGR), and 242 to 245 (TKLD).

The protein belongs to the GTP-binding SRP family. SRP54 subfamily. Part of the signal recognition particle protein translocation system, which is composed of SRP and FtsY. Archaeal SRP consists of a 7S RNA molecule of 300 nucleotides and two protein subunits: SRP54 and SRP19.

Its subcellular location is the cytoplasm. The catalysed reaction is GTP + H2O = GDP + phosphate + H(+). In terms of biological role, involved in targeting and insertion of nascent membrane proteins into the cytoplasmic membrane. Binds to the hydrophobic signal sequence of the ribosome-nascent chain (RNC) as it emerges from the ribosomes. The SRP-RNC complex is then targeted to the cytoplasmic membrane where it interacts with the SRP receptor FtsY. In Halobacterium salinarum (strain ATCC 29341 / DSM 671 / R1), this protein is Signal recognition particle 54 kDa protein.